A 415-amino-acid polypeptide reads, in one-letter code: Phosphoglycerate kinase (415 aa).

Substrate-binding positions include 24–26 (DLN), Arg-39, 62–65 (HLGR), Arg-121, and Arg-161. ATP-binding positions include Lys-211, Gly-307, Glu-338, and 367 to 370 (GGDS).

This sequence belongs to the phosphoglycerate kinase family. As to quaternary structure, monomer.

The protein resides in the cytoplasm. It catalyses the reaction (2R)-3-phosphoglycerate + ATP = (2R)-3-phospho-glyceroyl phosphate + ADP. The protein operates within carbohydrate degradation; glycolysis; pyruvate from D-glyceraldehyde 3-phosphate: step 2/5. The polypeptide is Phosphoglycerate kinase (Micrococcus luteus (strain ATCC 4698 / DSM 20030 / JCM 1464 / CCM 169 / CCUG 5858 / IAM 1056 / NBRC 3333 / NCIMB 9278 / NCTC 2665 / VKM Ac-2230) (Micrococcus lysodeikticus)).